Here is a 459-residue protein sequence, read N- to C-terminus: uncharacterized protein (459 aa).

The 59-residue stretch at 7 to 65 (PVNKNEIYTLTFEDLTHEGNGVAKIEGYPLFVPEVLPDEQAKVKVVKVNKNFGFGKLLE) folds into the TRAM domain. Cys78, Cys82, Cys85, and Cys164 together coordinate [4Fe-4S] cluster. Residues Gln288, Tyr317, Glu338, and Asp386 each coordinate S-adenosyl-L-methionine. Cys413 (nucleophile) is an active-site residue.

This sequence belongs to the class I-like SAM-binding methyltransferase superfamily. RNA M5U methyltransferase family.

This is an uncharacterized protein from Oceanobacillus iheyensis (strain DSM 14371 / CIP 107618 / JCM 11309 / KCTC 3954 / HTE831).